Here is a 330-residue protein sequence, read N- to C-terminus: MADIIARLREDGIQKRVIQEGRGELPDFQDGTKATFHYRTLHSDNEGTVLDDSRVRGKPMELIIGKKFKLPVWETIVCTMREGEIAQFLCDIKHVVLYPLVAKSLGNIAVGKDPLEGQRHCCGVAQMHEHSSLGHADLDALQQNPQPLVFHMEMLKVESPGTYQQDPWAMTDEEKAKAVPLIHQEGNRLYREGHVKEAAAKYYDAIACLKNLQMKEQPGSPEWIQLDQQITPLLLNYCQCKLVAEEYYEVLDHCSSILNKYDDNVKAYFKRGKAHAAVWNAQEAQADFAKVLELDPALAPVVSRELRALEARIRQKDEEDKARFRGIFSH.

Ser-43 carries the post-translational modification Phosphoserine. Residues 54 to 146 form the PPIase FKBP-type domain; sequence RVRGKPMELI…DLDALQQNPQ (93 aa). 3 TPR repeats span residues 179 to 212, 231 to 264, and 265 to 298; these read VPLI…LKNL, TPLL…YDDN, and VKAY…DPAL.

In terms of assembly, interacts with RET in the pituitary gland; this interaction prevents the formation of the AIP-survivin complex.

It is found in the cytoplasm. Functionally, may play a positive role in AHR-mediated (aromatic hydrocarbon receptor) signaling, possibly by influencing its receptivity for ligand and/or its nuclear targeting. Cellular negative regulator of the hepatitis B virus (HBV) X protein. The chain is AH receptor-interacting protein (AIP) from Chlorocebus aethiops (Green monkey).